Reading from the N-terminus, the 254-residue chain is NAD-dependent protein deacylase (254 aa).

The region spanning 1–250 is the Deacetylase sirtuin-type domain; that stretch reads MERLEEARKR…LPPSPEDQAE (250 aa). 22–41 lines the NAD(+) pocket; sequence GAGISKPSGIPTFRDAEGLW. Residues tyrosine 66 and arginine 69 each coordinate substrate. 104–107 contributes to the NAD(+) binding site; that stretch reads QNVD. The active-site Proton acceptor is the histidine 122. Zn(2+) is bound by residues cysteine 130, cysteine 133, cysteine 149, and cysteine 152. NAD(+)-binding positions include 189-191, 215-217, and alanine 233; these read GTS and NPE.

This sequence belongs to the sirtuin family. Class III subfamily. The cofactor is Zn(2+).

It localises to the cytoplasm. It catalyses the reaction N(6)-acetyl-L-lysyl-[protein] + NAD(+) + H2O = 2''-O-acetyl-ADP-D-ribose + nicotinamide + L-lysyl-[protein]. It carries out the reaction N(6)-succinyl-L-lysyl-[protein] + NAD(+) + H2O = 2''-O-succinyl-ADP-D-ribose + nicotinamide + L-lysyl-[protein]. In terms of biological role, NAD-dependent lysine deacetylase and desuccinylase that specifically removes acetyl and succinyl groups on target proteins. Modulates the activities of several proteins which are inactive in their acylated form. The sequence is that of NAD-dependent protein deacylase from Thermus thermophilus (strain ATCC 27634 / DSM 579 / HB8).